The primary structure comprises 742 residues: Serine/threonine-protein kinase SKY1 (742 aa).

Residues lysine 13–proline 146 form a disordered region. The segment covering aspartate 19–glutamine 35 has biased composition (polar residues). Residues threonine 56–alanine 73 show a composition bias toward low complexity. The segment covering threonine 81–valine 101 has biased composition (basic and acidic residues). Residues serine 106–serine 127 show a composition bias toward low complexity. The segment covering cysteine 128 to arginine 140 has biased composition (basic and acidic residues). Residues tyrosine 158–leucine 706 enclose the Protein kinase domain. Residues leucine 164–valine 172 and lysine 187 contribute to the ATP site. Catalysis depends on aspartate 294, which acts as the Proton acceptor. Threonine 383 and threonine 386 each carry phosphothreonine. Serine 388, serine 393, serine 410, serine 427, serine 432, serine 445, serine 449, and serine 453 each carry phosphoserine. The disordered stretch occupies residues isoleucine 459–methionine 491. The segment covering aspartate 465–aspartate 489 has biased composition (low complexity).

This sequence belongs to the protein kinase superfamily. Ser/Thr protein kinase family.

It carries out the reaction L-seryl-[protein] + ATP = O-phospho-L-seryl-[protein] + ADP + H(+). The catalysed reaction is L-threonyl-[protein] + ATP = O-phospho-L-threonyl-[protein] + ADP + H(+). Functionally, constitutively active kinase, specifically and sequentially phosphorylates serine/arginine (SR)-type shuttling mRNA binding proteins in their RS dipeptide repeats. In Saccharomyces cerevisiae (strain ATCC 204508 / S288c) (Baker's yeast), this protein is Serine/threonine-protein kinase SKY1 (SKY1).